A 476-amino-acid chain; its full sequence is Sulfite exporter TauE/SafE family protein 3 (476 aa).

12 helical membrane passes run 8–28 (WLGL…FAFV), 76–92 (FNWQ…FGAA), 99–115 (VGGG…IIGF), 120–142 (ATAI…NLRL), 151–171 (IIDY…ISIG), 172–192 (VAFN…VLFL), 257–277 (VYWK…ALQI), 291–311 (VINL…AVAL), 339–359 (FGII…FIMG), 360–380 (PLFL…TFAM), 397–417 (FPVP…WVGQ), and 433–453 (IIFI…GVGI).

This sequence belongs to the 4-toluene sulfonate uptake permease (TSUP) (TC 2.A.102) family.

It is found in the membrane. In Arabidopsis thaliana (Mouse-ear cress), this protein is Sulfite exporter TauE/SafE family protein 3.